Here is a 550-residue protein sequence, read N- to C-terminus: Hydroxylamine reductase (550 aa).

The [2Fe-2S] cluster site is built by Cys3, Cys6, Cys18, and Cys25. Residues His249, Glu273, Cys317, Cys405, Cys433, Cys458, Glu492, and Lys494 each coordinate hybrid [4Fe-2O-2S] cluster. A Cysteine persulfide modification is found at Cys405.

The protein belongs to the HCP family. [2Fe-2S] cluster is required as a cofactor. It depends on hybrid [4Fe-2O-2S] cluster as a cofactor.

The protein resides in the cytoplasm. The catalysed reaction is A + NH4(+) + H2O = hydroxylamine + AH2 + H(+). Catalyzes the reduction of hydroxylamine to form NH(3) and H(2)O. This chain is Hydroxylamine reductase, found in Escherichia coli O6:H1 (strain CFT073 / ATCC 700928 / UPEC).